Reading from the N-terminus, the 627-residue chain is Carene synthase 2, chloroplastic (627 aa).

The transit peptide at 1-36 (MSVISIVPLASKSCLYKSLMSSTHELKALCRPIVTL) directs the protein to the chloroplast. Positions 378, 382, and 530 each coordinate Mg(2+). The DDXXD motif signature appears at 378–382 (DDMYD).

Belongs to the terpene synthase family. Tpsd subfamily. Mg(2+) is required as a cofactor. Requires Mn(2+) as cofactor.

It localises to the plastid. The protein localises to the chloroplast. The catalysed reaction is (2E)-geranyl diphosphate = (+)-car-3-ene + diphosphate. It functions in the pathway terpene metabolism; oleoresin biosynthesis. Terpene synthase (TPS) involved in defensive oleoresin formation in conifers in response to insect attack (e.g. white pine weevil P.strobi) or other injury. In Picea sitchensis (Sitka spruce), this protein is Carene synthase 2, chloroplastic (TPS-3car2).